A 243-amino-acid chain; its full sequence is MSGHSKWHNIQGRKNAQDAKRGKVFQKLSREIYMAAKSGGPDPSGNPTLRMVMDKARAANMPKTNIERAIKKAEGNSDEHYDEITYEGYAPGGVAVLVEALTDNKNRTASDVRVAFTRNGGSLGATGSVAYMFDRKGYIVIDRSTTDADEDQVLLDVMDAGGDDLETSDDAFEIYTDPKQFTAVRDALEKAGYKLANAELTMIPQNTTPVPADKKEQFTHLIDALEDNDDVSNVYTAAADDDE.

The tract at residues 1–22 (MSGHSKWHNIQGRKNAQDAKRG) is disordered.

Belongs to the TACO1 family.

The protein localises to the cytoplasm. This is Probable transcriptional regulatory protein LGAS_1276 from Lactobacillus gasseri (strain ATCC 33323 / DSM 20243 / BCRC 14619 / CIP 102991 / JCM 1131 / KCTC 3163 / NCIMB 11718 / NCTC 13722 / AM63).